The sequence spans 292 residues: GTP cyclohydrolase FolE2 (292 aa).

Belongs to the GTP cyclohydrolase IV family.

It carries out the reaction GTP + H2O = 7,8-dihydroneopterin 3'-triphosphate + formate + H(+). It functions in the pathway cofactor biosynthesis; 7,8-dihydroneopterin triphosphate biosynthesis; 7,8-dihydroneopterin triphosphate from GTP: step 1/1. Converts GTP to 7,8-dihydroneopterin triphosphate. The polypeptide is GTP cyclohydrolase FolE2 (Staphylococcus epidermidis (strain ATCC 12228 / FDA PCI 1200)).